The chain runs to 959 residues: Glycine dehydrogenase (decarboxylating) (959 aa).

Residue Lys708 is modified to N6-(pyridoxal phosphate)lysine.

This sequence belongs to the GcvP family. The glycine cleavage system is composed of four proteins: P, T, L and H. Requires pyridoxal 5'-phosphate as cofactor.

It catalyses the reaction N(6)-[(R)-lipoyl]-L-lysyl-[glycine-cleavage complex H protein] + glycine + H(+) = N(6)-[(R)-S(8)-aminomethyldihydrolipoyl]-L-lysyl-[glycine-cleavage complex H protein] + CO2. Functionally, the glycine cleavage system catalyzes the degradation of glycine. The P protein binds the alpha-amino group of glycine through its pyridoxal phosphate cofactor; CO(2) is released and the remaining methylamine moiety is then transferred to the lipoamide cofactor of the H protein. This Yersinia enterocolitica serotype O:8 / biotype 1B (strain NCTC 13174 / 8081) protein is Glycine dehydrogenase (decarboxylating).